The sequence spans 39 residues: Photosystem II reaction center protein J (39 aa).

Residues 7 to 27 traverse the membrane as a helical segment; it reads IPLWIVAVVVGLGVVTVVGLF.

Belongs to the PsbJ family. In terms of assembly, PSII is composed of 1 copy each of membrane proteins PsbA, PsbB, PsbC, PsbD, PsbE, PsbF, PsbH, PsbI, PsbJ, PsbK, PsbL, PsbM, PsbT, PsbX, PsbY, PsbZ, Psb30/Ycf12, peripheral proteins PsbO, CyanoQ (PsbQ), PsbU, PsbV and a large number of cofactors. It forms dimeric complexes.

The protein localises to the cellular thylakoid membrane. Its function is as follows. One of the components of the core complex of photosystem II (PSII). PSII is a light-driven water:plastoquinone oxidoreductase that uses light energy to abstract electrons from H(2)O, generating O(2) and a proton gradient subsequently used for ATP formation. It consists of a core antenna complex that captures photons, and an electron transfer chain that converts photonic excitation into a charge separation. This chain is Photosystem II reaction center protein J, found in Synechococcus sp. (strain JA-3-3Ab) (Cyanobacteria bacterium Yellowstone A-Prime).